We begin with the raw amino-acid sequence, 125 residues long: Probable endoribonuclease HigB1 (125 aa).

It belongs to the mycobacterial HigB family.

Its function is as follows. Toxic component of an atypical, type II toxin-antitoxin chaperone (TAC) system. Probably an endoribonuclease, neutralized by its cognate antitoxin HigA which also requires SecB-like chaperone MT2006 (AC Q7D7P7). The chain is Probable endoribonuclease HigB1 from Mycobacterium tuberculosis (strain CDC 1551 / Oshkosh).